We begin with the raw amino-acid sequence, 245 residues long: MSRIDGRTPEQLRPVTIERGWSKHAEGSVLISFGDTKVFCTASVTEGVPRWRKGSGEGWVTAEYSMLPRSTNTRGDREAVRGKIGGRTHEISRLIGRSLRAVIDCKALGENTIVLDCDVLQADGGTRTAAITGAYVALADAVAWAQGKKIVKAGRKPLTDTVAAISVGIVDGTPLLDLCYEEDVRAETDMNVVCTGDGRFVEVQGTAEGAPFDRKELGALLDLATAGCVDLAALQRDALVRTQDA.

Residues R87 and 125-127 (GTR) each bind phosphate.

This sequence belongs to the RNase PH family. As to quaternary structure, homohexameric ring arranged as a trimer of dimers.

The enzyme catalyses tRNA(n+1) + phosphate = tRNA(n) + a ribonucleoside 5'-diphosphate. Phosphorolytic 3'-5' exoribonuclease that plays an important role in tRNA 3'-end maturation. Removes nucleotide residues following the 3'-CCA terminus of tRNAs; can also add nucleotides to the ends of RNA molecules by using nucleoside diphosphates as substrates, but this may not be physiologically important. Probably plays a role in initiation of 16S rRNA degradation (leading to ribosome degradation) during starvation. This chain is Ribonuclease PH, found in Streptomyces griseus subsp. griseus (strain JCM 4626 / CBS 651.72 / NBRC 13350 / KCC S-0626 / ISP 5235).